The sequence spans 132 residues: Fatty acid-binding protein, intestinal (132 aa).

Position 2 is an N-acetylalanine (Ala2). Trp83 and Arg107 together coordinate hexadecanoate. Trp83 and Arg107 together coordinate tetradecanoate.

Belongs to the calycin superfamily. Fatty-acid binding protein (FABP) family.

It localises to the cytoplasm. Its function is as follows. FABPs are thought to play a role in the intracellular transport of long-chain fatty acids and their acyl-CoA esters. FABP2 is probably involved in triglyceride-rich lipoprotein synthesis. Binds saturated long-chain fatty acids with a high affinity, but binds with a lower affinity to unsaturated long-chain fatty acids. FABP2 may also help maintain energy homeostasis by functioning as a lipid sensor. The polypeptide is Fatty acid-binding protein, intestinal (FABP2) (Bos taurus (Bovine)).